We begin with the raw amino-acid sequence, 503 residues long: Interferon regulatory factor 7 (503 aa).

A DNA-binding region (IRF tryptophan pentad repeat) is located at residues 11–126; the sequence is RVLFGEWLLG…DPHKVYALSR (116 aa). The segment at 69-88 is disordered; sequence RWPPSSRGGGPPPEAETAER. The residue at position 92 (Lys-92) is an N6-acetyllysine; by KAT2A and KAT2B. Disordered regions lie at residues 133–156 and 242–277; these read GPGT…GPPG and TTPS…SPSA. The span at 146–156 shows a compositional bias: pro residues; the sequence is AVPPPQGGPPG. The tract at residues 284–456 is necessary for the interaction with NMI; it reads PSPGALDVTI…SLVLVKLEPW (173 aa). A Glycyl lysine isopeptide (Lys-Gly) (interchain with G-Cter in ubiquitin) cross-link involves residue Lys-375. Glycyl lysine isopeptide (Lys-Gly) (interchain with G-Cter in SUMO) cross-links involve residues Lys-444 and Lys-446. Phosphoserine is present on residues Ser-471, Ser-472, and Ser-475. A phosphoserine; by TBK1 and IKKE mark is found at Ser-477 and Ser-479. Phosphoserine occurs at positions 483, 484, and 487.

This sequence belongs to the IRF family. In terms of assembly, monomer. Homodimer; phosphorylation-induced. Heterodimer with IRF3. Interacts with TICAM1 and TICAM2. Interacts with MYD88 and TRAF6. Interacts with TRIM35. Interacts with NMI; the interaction is direct and leads to the inhibition of IRF7-mediated type I IFN production. Interacts with GBP4; preventing interaction between TRAF6 and IRF7, resulting in impaired TRAF6-mediated IRF7 ubiquitination. As to quaternary structure, (Microbial infection) Interacts with Epstein-Barr virus LF2 and LMP1. (Microbial infection) Interacts with rotavirus A NSP1; this interaction leads to the proteasome-dependent degradation of IRF7. In terms of assembly, (Microbial infection) Interacts with human herpes virus 8/HHV-8 proteins ORF45 and vIRF-1. As to quaternary structure, (Microbial infection) Interacts with human T-cell leukemia virus 1/HTLV-1 protein HBZ. (Microbial infection) Interacts with Seneca Valley virus protease 3C; this interaction is involved in the suppression of IRF7 expression and phosphorylation by the virus. In terms of assembly, (Microbial infection) Interacts with ebolavirus VP35; this interaction mediates the sumoylation of IRF7 and contributes to the viral inhibition of IFN-type I production. As to quaternary structure, (Microbial infection) Interacts with severe fever with thrombocytopenia syndrome virus (SFTSV) NSs; this interaction sequesters IRF7 in NSs-induced cytoplasmic inclusion bodies. (Microbial infection) Interacts with herpes virus 8/HHV-8 protein vIRF-4; this interaction prevents IRF7 dimerization and subsequent activation. In terms of assembly, (Microbial infection) Interacts with human metapneumovirus protein M2-2; this interaction prevents IRF7 phosphorlyation and subsequent TLR7/9-dependent IFN-alpha induction. In terms of processing, acetylation inhibits its DNA-binding ability and activity. In response to a viral infection, phosphorylated on Ser-477 and Ser-479 by TBK1 and IKBKE1. Phosphorylation, and subsequent activation is inhibited by vaccinia virus protein E3. In TLR7- and TLR9-mediated signaling pathway, phosphorylated by IRAK1. Post-translationally, TRAF6-mediated ubiquitination is required for IRF7 activation. TRIM35 mediates IRF7 'Lys-48'-linked polyubiquitination and subsequent proteasomal degradation. Ubiquitinated by UBE3C, leading to its degradation. In terms of processing, sumoylated by TRIM28, which inhibits its transactivation activity. (Microbial infection) Cleaved and inactivated by the protease 3C of enterovirus 71 allowing the virus to disrupt the host type I interferon production. Post-translationally, (Microbial infection) Cleaved and inactivated by the protease 3C of human enterovirus 68D (EV68) allowing the virus to disrupt the host type I interferon production. In terms of processing, 'Lys-48'-linked polyubiquitination and subsequent proteasomal degradation is NMI-dependent in response to Sendai virus infection. 'Lys-63'-linked ubiquitination by NEURL3 promotes IRF7 activation. As to expression, expressed predominantly in spleen, thymus and peripheral blood leukocytes.

The protein resides in the nucleus. It localises to the cytoplasm. With respect to regulation, in the absence of viral infection, maintained as a monomer in an autoinhibited state and phosphorylation disrupts this autoinhibition leading to the liberation of the DNA-binding and dimerization activities and its nuclear localization where it can activate type I IFN and ISG genes. Functionally, key transcriptional regulator of type I interferon (IFN)-dependent immune responses and plays a critical role in the innate immune response against DNA and RNA viruses. Regulates the transcription of type I IFN genes (IFN-alpha and IFN-beta) and IFN-stimulated genes (ISG) by binding to an interferon-stimulated response element (ISRE) in their promoters. Can efficiently activate both the IFN-beta (IFNB) and the IFN-alpha (IFNA) genes and mediate their induction via both the virus-activated, MyD88-independent pathway and the TLR-activated, MyD88-dependent pathway. Induces transcription of ubiquitin hydrolase USP25 mRNA in response to lipopolysaccharide (LPS) or viral infection in a type I IFN-dependent manner. Required during both the early and late phases of the IFN gene induction but is more critical for the late than for the early phase. Exists in an inactive form in the cytoplasm of uninfected cells and following viral infection, double-stranded RNA (dsRNA), or toll-like receptor (TLR) signaling, becomes phosphorylated by IKBKE and TBK1 kinases. This induces a conformational change, leading to its dimerization and nuclear localization where along with other coactivators it can activate transcription of the type I IFN and ISG genes. Can also play a role in regulating adaptive immune responses by inducing PSMB9/LMP2 expression, either directly or through induction of IRF1. Binds to the Q promoter (Qp) of EBV nuclear antigen 1 a (EBNA1) and may play a role in the regulation of EBV latency. Can activate distinct gene expression programs in macrophages and regulate the anti-tumor properties of primary macrophages. The protein is Interferon regulatory factor 7 (IRF7) of Homo sapiens (Human).